The following is a 481-amino-acid chain: Guanine nucleotide exchange factor C9orf72 homolog (481 aa).

Residues 23–194 (SPLLAATFAY…ELLASMRSHS (172 aa)) form the uDENN C9ORF72-type domain. One can recognise a cDENN C9ORF72-type domain in the interval 200–343 (DIADTVLNDD…SELTAFWRAT (144 aa)). The dDENN C9ORF72-type domain maps to 370–464 (VLHRDTLVKA…IKPGLHSFIF (95 aa)). Residues 461 to 481 (SFIFGRPFYTSVQERDVLMTF) are required for the homodimerization of the C9orf72-SMCR8 complex.

Component of the C9orf72-SMCR8 complex, at least composed of C9orf72, SMCR8 and WDR41. The complex is formed of two protomers, each individually consisting of one molecule each of C9orf72, SMCR8 and WDR41. The protomers homodimerize via an interaction between C9orf72 (via C-terminus) and SMCR8 (via N-terminus). Within each protomer SMCR8 (via DENN domain) acts as a bridging protein between WDR41 (via C-terminus and N-terminus) and C9orf72 (via C-terminus). The C9orf72-SMCR8 complex associates with the ULK1/ATG1 kinase complex. Interacts with ULK1/ATG1 kinase complex members ULK1, ATG13 and RB1CC1. Interacts with SMCR8; the interaction is direct. Interacts with HNRNPA1, HNRNPA2B1 and UBQLN2. Interacts with small Rab GTPase RAB1A; the interaction mediates recruitment of RAB1A to the ULK1/ATG1 kinase complex. Also interacts with small Rab GTPase RAB7A. Interacts with cofilin. Interacts with GTP-binding proteins ARF1 and ARF6. Interacts with the DLG4/PSD-95. Interacts with CARM1 (via PH domain-like fold). Interacts with RAB39A and RAB39B (in GDP-bound forms); functions as GEF for RAB39A and RAB39B.

The protein localises to the nucleus. It localises to the cytoplasm. It is found in the P-body. The protein resides in the stress granule. Its subcellular location is the endosome. The protein localises to the lysosome. It localises to the cytoplasmic vesicle. It is found in the autophagosome. The protein resides in the autolysosome. Its subcellular location is the secreted. The protein localises to the cell projection. It localises to the axon. It is found in the growth cone. The protein resides in the perikaryon. Its function is as follows. Acts as a guanine-nucleotide releasing factor (GEF) for Rab GTPases by promoting the conversion of inactive RAB-GDP to the active form RAB-GTP. Acts as a GEF for RAB39A which enables HOPS-mediated autophagosome-lysosome membrane tethering and fusion in mammalian autophagy. Component of the C9orf72-SMCR8 complex where both subunits display GEF activity and that regulates autophagy. As part of the C9orf72-SMCR8-WDR41 (CSW) complex, functions as GEF for RAB8A and RAB39B, thereby promoting autophagosome maturation. As part of the C9orf72-SMCR8 complex, also functions as GTPase activating protein (GAP) for RAB8A and RAB11A in vitro. The C9orf72-SMCR8 complex also acts as a regulator of autophagy initiation by interacting with the ULK1/ATG1 kinase complex and modulating its protein kinase activity. Promotes initiation of autophagy by regulating the RAB1A-dependent trafficking of the ULK1/ATG1 kinase complex to the phagophore which leads to autophagosome formation. Acts as a regulator of mTORC1 signaling by promoting phosphorylation of mTORC1 substrates. Plays a role in endosomal trafficking. May be involved in regulating the maturation of phagosomes to lysosomes. Promotes the lysosomal localization and lysosome-mediated degradation of CARM1 which leads to inhibition of starvation-induced lipid metabolism. Regulates actin dynamics in motor neurons by inhibiting the GTP-binding activity of ARF6, leading to ARF6 inactivation. This reduces the activity of the LIMK1 and LIMK2 kinases which are responsible for phosphorylation and inactivation of cofilin, leading to CFL1/cofilin activation. Positively regulates axon extension and axon growth cone size in spinal motor neurons. Required for SMCR8 protein expression and localization at pre- and post-synaptic compartments in the forebrain, also regulates protein abundance of RAB3A and GRIA1/GLUR1 in post-synaptic compartments in the forebrain and hippocampus. Plays a role within the hematopoietic system in restricting inflammation and the development of autoimmunity. This Rattus norvegicus (Rat) protein is Guanine nucleotide exchange factor C9orf72 homolog.